A 299-amino-acid polypeptide reads, in one-letter code: Glycine--tRNA ligase alpha subunit (299 aa).

Belongs to the class-II aminoacyl-tRNA synthetase family. As to quaternary structure, tetramer of two alpha and two beta subunits.

It is found in the cytoplasm. The catalysed reaction is tRNA(Gly) + glycine + ATP = glycyl-tRNA(Gly) + AMP + diphosphate. This chain is Glycine--tRNA ligase alpha subunit, found in Desulforapulum autotrophicum (strain ATCC 43914 / DSM 3382 / VKM B-1955 / HRM2) (Desulfobacterium autotrophicum).